Consider the following 35-residue polypeptide: Photosystem II reaction center protein M (35 aa).

A helical membrane pass occupies residues 7–27 (GFIASILFVLVPTVFLLILFI).

Belongs to the PsbM family. As to quaternary structure, PSII is composed of 1 copy each of membrane proteins PsbA, PsbB, PsbC, PsbD, PsbE, PsbF, PsbH, PsbI, PsbJ, PsbK, PsbL, PsbM, PsbT, PsbX, PsbY, PsbZ, Psb30/Ycf12, peripheral proteins PsbO, CyanoQ (PsbQ), PsbU, PsbV and a large number of cofactors. It forms dimeric complexes.

It is found in the cellular thylakoid membrane. Its function is as follows. One of the components of the core complex of photosystem II (PSII). PSII is a light-driven water:plastoquinone oxidoreductase that uses light energy to abstract electrons from H(2)O, generating O(2) and a proton gradient subsequently used for ATP formation. It consists of a core antenna complex that captures photons, and an electron transfer chain that converts photonic excitation into a charge separation. This subunit is found at the monomer-monomer interface. This chain is Photosystem II reaction center protein M, found in Microcystis aeruginosa (strain NIES-843 / IAM M-2473).